A 205-amino-acid polypeptide reads, in one-letter code: MGRNPLIIGVTGRIASGKDTVSKIISNKYGFYEINADKLGHSVLHEKKEEIVKIFGQKILNTKNEIDKLLLRNLVFNDNKELKKLESVSHPVILSKIKKILIQNQSTKIIINAALLFKMNLEKLCDYIIVLKAKNSIIKNRLSYSIPNIDSNMINKILKIQKDIFFEKNIINLKIINIINNKNYAYLEKEIEKKMQGIINYERFE.

The region spanning I7–E205 is the DPCK domain. A15–T20 serves as a coordination point for ATP.

It belongs to the CoaE family.

It localises to the cytoplasm. It catalyses the reaction 3'-dephospho-CoA + ATP = ADP + CoA + H(+). It functions in the pathway cofactor biosynthesis; coenzyme A biosynthesis; CoA from (R)-pantothenate: step 5/5. Catalyzes the phosphorylation of the 3'-hydroxyl group of dephosphocoenzyme A to form coenzyme A. This is Dephospho-CoA kinase from Borreliella burgdorferi (strain ATCC 35210 / DSM 4680 / CIP 102532 / B31) (Borrelia burgdorferi).